The sequence spans 775 residues: E3 ubiquitin-protein ligase ICP0 (775 aa).

Residues 1–112 (MEPRPGASTR…PPREDGGSDE (112 aa)) are disordered. Composition is skewed to basic and acidic residues over residues 10-21 (RRPEGRPQREPA) and 45-57 (VGGRGDADHHDDD). Residues 58–69 (SASEADSTDTEL) show a composition bias toward acidic residues. The residue at position 67 (T67) is a Phosphothreonine; by host; by CK1. The segment at 116-157 (CAVCTDEIAPHLRCDTFPCMHRFCIPCMKTWMQLRNTCPLCN) adopts an RING-type zinc-finger fold. The tract at residues 221–636 (RALSPTHPEP…HAETSGAVPA (416 aa)) is disordered. The segment covering 231-243 (TTDEDDDDLDDAD) has biased composition (acidic residues). A compositionally biased stretch (low complexity) spans 258 to 284 (RRGAAAPPVTGGASHAAPQPAAARTAP). The span at 293-302 (GSSNTNTTTN) shows a compositional bias: polar residues. The span at 310–321 (RQSRAAAPRGAS) shows a compositional bias: low complexity. The segment covering 322 to 331 (GPSGGVGVGV) has biased composition (gly residues). Pro residues predominate over residues 369–390 (PASPHRPPAAPMPGSAPRPGPP). Residues 391–409 (ASAAASGPARPRAAVAPCV) are compositionally biased toward low complexity. The span at 410-421 (RAPPPGPGPRAP) shows a compositional bias: pro residues. A compositionally biased stretch (low complexity) spans 422 to 431 (APGAEPAARP). Polar residues predominate over residues 439–453 (QSHSSLAQAANQEQS). The segment covering 464–476 (GSGGPGVEGGHGP) has biased composition (gly residues). The span at 477–493 (SRGAAPSGAAPLPSAAS) shows a compositional bias: low complexity. Over residues 509 to 519 (GQENPSPQSTR) the composition is skewed to polar residues. Residues 539-549 (GPGGRGQGGPG) show a composition bias toward gly residues. Residues 550–592 (TPLTSSAASASSSSASSSSAPTPAGAASSAAGAASSSASASSG) are compositionally biased toward low complexity. The span at 617-626 (GPRKCARKTR) shows a compositional bias: basic residues.

It belongs to the simplexviruses ICp0 family. As to quaternary structure, interacts directly with human RCOR1/CoREST protein, leading to the disruption of the human BHC corepressor complex. Interacts with human CENPA, leading to its degradation. Interacts with human USP7; this interaction modulates ICP0 stability. Interacts with human CDC34. Interacts (when phosphorylated) with human RNF8 (via FHA domain). Interacts with human TRIM27. Interacts with human ZBP1. Interacts with host MORC3; this interaction promotes the degradation of host MORC3. Post-translationally, phosphorylated at Thr-67, leading to promote interaction with host RNF8. Phosphorylated by host CHEK2; leading to increased SUMO-targeted ubiquitin ligase activity of ICP0. Auto-ubiquitinated. Deubiquitinated by host USP7; leading to stabilize it.

It localises to the host cytoplasm. The protein resides in the host nucleus. It catalyses the reaction S-ubiquitinyl-[E2 ubiquitin-conjugating enzyme]-L-cysteine + [acceptor protein]-L-lysine = [E2 ubiquitin-conjugating enzyme]-L-cysteine + N(6)-ubiquitinyl-[acceptor protein]-L-lysine.. Its function is as follows. SUMO-targeted ubiquitin ligase that plays an essential role in nuclear antiviral defense evasion triggered by dsDNA viruses. Acts during the initial stages of lytic infection and the reactivation of latent viral genome. Prevents the antiviral effect of nuclear bodies by degrading host PML, SP100 and MORC3. Prevents antiviral response to viral DNA induced by IFI16 by degrading it. Additionally, inhibits host IRF3 nuclear signaling to prevent interferon production by the infected cells. Interestingly, the E3 ubiquitin ligase activity associated with the RING finger domain does not seem to be directly required to inhibit the activation of IRF3 but instead plays a critical role in modulating the cellular localization of ICP0. Upon reactivation of latent genome, suppresses the silencing of viral DNA by dissociating either HDAC1 or HDAC2 from the HDAC-RCOR1-REST-KDM1A complex localized at the ND10 structures and causes their dispersal. Two cellular histone ubiquitin ligases RNF8 and RNF168 are also targeted by ICP0 for degradation, leading to a loss of ubiquitinated forms of H2A, a relief of transcriptional repression, and the activation of latent viral genomes. Enhances the localization of host CCND3 to ND10 bodies that serve as precursors of replication compartments to enable efficient viral replication. Like many RING-finger E3 ubiquitin ligases, ICP0 can induce its own ubiquitination, an activity that promotes its instability due to its targeting to the 26S proteasome for degradation. ICP0 restricts this process by recruiting the cellular ubiquitin-specific protease USP7 that cleaves the anchored ubiquitin chains from ICP0, thereby promoting its stabilization. The protein is E3 ubiquitin-protein ligase ICP0 (ICP0) of Homo sapiens (Human).